The following is a 277-amino-acid chain: Diaminopimelate epimerase (277 aa).

The substrate site is built by asparagine 11 and asparagine 72. Catalysis depends on cysteine 81, which acts as the Proton donor. Residues 82–83, asparagine 189, and 207–208 contribute to the substrate site; these read GN and ER. Cysteine 217 (proton acceptor) is an active-site residue. Substrate is bound at residue 218 to 219; sequence GT.

This sequence belongs to the diaminopimelate epimerase family. As to quaternary structure, homodimer.

Its subcellular location is the cytoplasm. It carries out the reaction (2S,6S)-2,6-diaminopimelate = meso-2,6-diaminopimelate. The protein operates within amino-acid biosynthesis; L-lysine biosynthesis via DAP pathway; DL-2,6-diaminopimelate from LL-2,6-diaminopimelate: step 1/1. Functionally, catalyzes the stereoinversion of LL-2,6-diaminopimelate (L,L-DAP) to meso-diaminopimelate (meso-DAP), a precursor of L-lysine and an essential component of the bacterial peptidoglycan. The sequence is that of Diaminopimelate epimerase from Hydrogenobaculum sp. (strain Y04AAS1).